Consider the following 41-residue polypeptide: Photosystem I reaction center subunit VIII (41 aa).

Residues 12-32 (WIMIPVTCWLFPVVVMGLLFI) form a helical membrane-spanning segment.

The protein belongs to the PsaI family.

It localises to the cellular thylakoid membrane. In terms of biological role, may help in the organization of the PsaL subunit. The protein is Photosystem I reaction center subunit VIII of Cyanothece sp. (strain PCC 7425 / ATCC 29141).